The sequence spans 242 residues: Prosalusin (242 aa).

The first 26 residues, 1-26 (MAAATRSCRPWGSLLGLIWLVSAAAA), serve as a signal peptide directing secretion. Residues 27-189 (SWDLSSLRCN…SSWVVYGTNY (163 aa)) constitute a propeptide that is removed on maturation. 93–100 (GWTGTGKS) serves as a coordination point for ATP. A glycan (N-linked (GlcNAc...) asparagine) is linked at Asn149.

It belongs to the ClpA/ClpB family. Torsin subfamily.

The protein localises to the secreted. In terms of biological role, salusin may be a endocrine and/or paracrine factor able to increase intracellular calcium concentrations and induce cell mitogenesis. Salusin may also be a potent hypotensive peptide. In Bos taurus (Bovine), this protein is Prosalusin (TOR2A).